The primary structure comprises 265 residues: MEEKKEEGEAEIQEHGPEHWFSKWERQCLAEAEQEEPAEEETDQSQQKLWHLFQNSATAVAQLYKDRVCQQQQGLSLWVPFQNAATAVTNLYKESVDAHQRSYELGIQIGHQRRNKDVLAWVKKRRRTIRREDLISFLCGKAPPPRSSRAPPRLAMVSPSRSTPSETSSSVETDLQPFREAIALHGLSGAMASISMRSGAPGSPTHLSASSAPSRRRNGLHDVDLNTFIAEEMALHLDNGTRKRSSAQCNDVITDSPTHKRNRMI.

Disordered regions lie at residues Met-1–Ser-22, Gly-140–Thr-173, and Ile-194–Gly-219. A compositionally biased stretch (low complexity) spans Ser-147–Glu-172.

The protein belongs to the HAPSTR1 family. Oligomer.

It is found in the nucleus. It localises to the cytoplasm. Functionally, acts as a central player within a network of stress response pathways promoting cellular adaptability. Functions as a negative regulator of TP53/P53 in the cellular response to telomere erosion and probably also DNA damage. This is HUWE1-associated protein modifying stress responses from Danio rerio (Zebrafish).